The primary structure comprises 697 residues: Hormonally up-regulated neu tumor-associated kinase homolog (697 aa).

A Protein kinase domain is found at Y55 to L313. ATP contacts are provided by residues L61 to V69 and K84. D179 serves as the catalytic Proton acceptor. 2 stretches are compositionally biased toward basic and acidic residues: residues K405–E424 and P460–S473. Disordered stretches follow at residues K405 to F480 and D586 to R642. Residues D586–F600 are compositionally biased toward polar residues. Positions S607–S626 are enriched in low complexity. Residues C627–S637 show a composition bias toward polar residues.

The protein belongs to the protein kinase superfamily. CAMK Ser/Thr protein kinase family. SNF1 subfamily.

The catalysed reaction is L-seryl-[protein] + ATP = O-phospho-L-seryl-[protein] + ADP + H(+). The enzyme catalyses L-threonyl-[protein] + ATP = O-phospho-L-threonyl-[protein] + ADP + H(+). In Xenopus tropicalis (Western clawed frog), this protein is Hormonally up-regulated neu tumor-associated kinase homolog (hunk).